A 1861-amino-acid chain; its full sequence is Protein TANC1 (1861 aa).

The residue at position 1 (Met-1) is an N-acetylmethionine. Disordered regions lie at residues 1 to 46 (MLKA…SSLP), 63 to 99 (SLPS…ESPR), 206 to 225 (KSPC…KDSG), 257 to 311 (QKGV…MPRP), and 439 to 486 (QIAS…ISAE). A compositionally biased stretch (basic and acidic residues) spans 8–21 (KSREGGKGGKKEAG). 5 positions are modified to phosphoserine: Ser-63, Ser-66, Ser-67, Ser-207, and Ser-270. Over residues 206–219 (KSPCETISSPSSTL) the composition is skewed to polar residues. The segment covering 440-455 (IASNSPGSSPKTSDPT) has biased composition (polar residues). Residues 461–480 (TPLLSPSSSTSASSTAKTPL) show a composition bias toward low complexity. Ser-465 carries the phosphoserine modification. ANK repeat units follow at residues 896–928 (EGLS…NVNY), 934–963 (NNAP…CLDG), 967–996 (NGMT…RVDH), 1000–1029 (KGQC…SPGP), 1040–1069 (ALQQ…EHEV), 1078–1107 (WGET…AVSR), 1111–1140 (RGVP…DVNL), 1144–1173 (QGRT…ALSS), 1177–1206 (EGLS…AIDQ), 1210–1239 (NGRT…VIEH), and 1243–1272 (SGMR…KLGN). TPR repeat units lie at residues 1289–1322 (LQKL…FPRE), 1336–1369 (VSLY…KPKS), and 1371–1403 (EAFY…CPTN). The segment covering 1421-1431 (QRSQQQKQQGP) has biased composition (low complexity). 2 disordered regions span residues 1421–1485 (QRSQ…SVPS) and 1636–1696 (VAVD…KVQG). Ser-1439 is modified (phosphoserine). Low complexity-rich tracts occupy residues 1467–1485 (QEES…SVPS) and 1659–1689 (SLTS…SSFS). Residues Ser-1668, Ser-1676, and Ser-1677 each carry the phosphoserine modification.

Belongs to the TANC family. In terms of assembly, interacts probably directly with DLG1, DLG4, HOMER1. Interacts with DLGAP1, INA, CAMK2A, GRIN2B and GRIA1. Interacts with TNIK. Interacts with MINK1. In terms of processing, phosphorylated; by MINK1 and TNIK upon stimulation by RAP2A.

It localises to the postsynaptic density. Functionally, may be a scaffold component in the postsynaptic density. The chain is Protein TANC1 (TANC1) from Homo sapiens (Human).